The following is a 191-amino-acid chain: Large ribosomal subunit protein bL9 (191 aa).

Positions 150–191 (EAERQAKGESLTSADAIYGVDEDALRPEDFFDPDADRDGDDE) are disordered. Acidic residues predominate over residues 179–191 (FFDPDADRDGDDE).

This sequence belongs to the bacterial ribosomal protein bL9 family.

Its function is as follows. Binds to the 23S rRNA. In Allorhizobium ampelinum (strain ATCC BAA-846 / DSM 112012 / S4) (Agrobacterium vitis (strain S4)), this protein is Large ribosomal subunit protein bL9.